The sequence spans 809 residues: Phenylalanine--tRNA ligase beta subunit (809 aa).

The region spanning Ala-39–Arg-154 is the tRNA-binding domain. Residues Pro-405–Ala-480 form the B5 domain. Asp-458, Asp-464, Glu-467, and Glu-468 together coordinate Mg(2+). The 102-residue stretch at Ser-707 to Arg-808 folds into the FDX-ACB domain.

The protein belongs to the phenylalanyl-tRNA synthetase beta subunit family. Type 1 subfamily. Tetramer of two alpha and two beta subunits. The cofactor is Mg(2+).

It localises to the cytoplasm. It carries out the reaction tRNA(Phe) + L-phenylalanine + ATP = L-phenylalanyl-tRNA(Phe) + AMP + diphosphate + H(+). This is Phenylalanine--tRNA ligase beta subunit from Burkholderia lata (strain ATCC 17760 / DSM 23089 / LMG 22485 / NCIMB 9086 / R18194 / 383).